The sequence spans 491 residues: Cyclin-B1-5 (491 aa).

A Cyclin N-terminal domain is found at 275–347 (DMYSFYKEVE…VKAVPKRELQ (73 aa)).

This sequence belongs to the cyclin family. Cyclin AB subfamily. In terms of tissue distribution, expressed in roots, stems and flowers.

In Arabidopsis thaliana (Mouse-ear cress), this protein is Cyclin-B1-5 (CYCB1-5).